The primary structure comprises 44 residues: Photosystem I reaction center subunit IX (44 aa).

The chain crosses the membrane as a helical span at residues 9-29 (FIRSAPVVAAVWLSLTAGIII).

It belongs to the PsaJ family.

The protein localises to the cellular thylakoid membrane. Functionally, may help in the organization of the PsaE and PsaF subunits. This chain is Photosystem I reaction center subunit IX, found in Prochlorococcus marinus subsp. pastoris (strain CCMP1986 / NIES-2087 / MED4).